The primary structure comprises 369 residues: 3-isopropylmalate dehydrogenase (369 aa).

The substrate site is built by R98, R108, R136, and D227. Mg(2+) contacts are provided by D227, D251, and D255. 290–302 (GSAPDIAGKGIAN) provides a ligand contact to NAD(+).

Belongs to the isocitrate and isopropylmalate dehydrogenases family. LeuB type 1 subfamily. Homodimer. Requires Mg(2+) as cofactor. It depends on Mn(2+) as a cofactor.

Its subcellular location is the cytoplasm. It catalyses the reaction (2R,3S)-3-isopropylmalate + NAD(+) = 4-methyl-2-oxopentanoate + CO2 + NADH. It functions in the pathway amino-acid biosynthesis; L-leucine biosynthesis; L-leucine from 3-methyl-2-oxobutanoate: step 3/4. Functionally, catalyzes the oxidation of 3-carboxy-2-hydroxy-4-methylpentanoate (3-isopropylmalate) to 3-carboxy-4-methyl-2-oxopentanoate. The product decarboxylates to 4-methyl-2 oxopentanoate. This is 3-isopropylmalate dehydrogenase from Gluconobacter oxydans (strain 621H) (Gluconobacter suboxydans).